Here is a 125-residue protein sequence, read N- to C-terminus: Small ribosomal subunit protein uS13 (125 aa).

A disordered region spans residues 92–125 (RRSLPVRGQNTQTNARTRKGKRKTVAGKKKAARK). A compositionally biased stretch (basic residues) spans 107-125 (RTRKGKRKTVAGKKKAARK).

The protein belongs to the universal ribosomal protein uS13 family. As to quaternary structure, part of the 30S ribosomal subunit. Forms a loose heterodimer with protein S19. Forms two bridges to the 50S subunit in the 70S ribosome.

Its function is as follows. Located at the top of the head of the 30S subunit, it contacts several helices of the 16S rRNA. In the 70S ribosome it contacts the 23S rRNA (bridge B1a) and protein L5 of the 50S subunit (bridge B1b), connecting the 2 subunits; these bridges are implicated in subunit movement. Contacts the tRNAs in the A and P-sites. The sequence is that of Small ribosomal subunit protein uS13 from Chlorobium luteolum (strain DSM 273 / BCRC 81028 / 2530) (Pelodictyon luteolum).